A 234-amino-acid chain; its full sequence is Large ribosomal subunit protein uL1 (234 aa).

The protein belongs to the universal ribosomal protein uL1 family. Part of the 50S ribosomal subunit.

Its function is as follows. Binds directly to 23S rRNA. The L1 stalk is quite mobile in the ribosome, and is involved in E site tRNA release. Functionally, protein L1 is also a translational repressor protein, it controls the translation of the L11 operon by binding to its mRNA. The polypeptide is Large ribosomal subunit protein uL1 (Helicobacter acinonychis (strain Sheeba)).